The chain runs to 118 residues: Large ribosomal subunit protein uL24 (118 aa).

It belongs to the universal ribosomal protein uL24 family. In terms of assembly, part of the 50S ribosomal subunit.

One of two assembly initiator proteins, it binds directly to the 5'-end of the 23S rRNA, where it nucleates assembly of the 50S subunit. Functionally, one of the proteins that surrounds the polypeptide exit tunnel on the outside of the subunit. The protein is Large ribosomal subunit protein uL24 of Prochlorococcus marinus (strain SARG / CCMP1375 / SS120).